Here is a 120-residue protein sequence, read N- to C-terminus: Ribonuclease P protein component (120 aa).

This sequence belongs to the RnpA family. As to quaternary structure, consists of a catalytic RNA component (M1 or rnpB) and a protein subunit.

The catalysed reaction is Endonucleolytic cleavage of RNA, removing 5'-extranucleotides from tRNA precursor.. In terms of biological role, RNaseP catalyzes the removal of the 5'-leader sequence from pre-tRNA to produce the mature 5'-terminus. It can also cleave other RNA substrates such as 4.5S RNA. The protein component plays an auxiliary but essential role in vivo by binding to the 5'-leader sequence and broadening the substrate specificity of the ribozyme. The polypeptide is Ribonuclease P protein component (Latilactobacillus sakei subsp. sakei (strain 23K) (Lactobacillus sakei subsp. sakei)).